The chain runs to 1892 residues: Kinesin-like protein KIN-12E (1892 aa).

Positions methionine 1–asparagine 28 are disordered. Residues asparagine 64–isoleucine 401 enclose the Kinesin motor domain. Glycine 145–threonine 152 serves as a coordination point for ATP. Coiled-coil stretches lie at residues lysine 406–methionine 438, serine 486–lysine 526, leucine 1066–glutamine 1139, lysine 1303–asparagine 1357, and isoleucine 1396–isoleucine 1528. Over residues leucine 1633–serine 1649 the composition is skewed to basic and acidic residues. The disordered stretch occupies residues leucine 1633–glycine 1656. Residues methionine 1780 to glutamate 1841 are a coiled coil. The tract at residues histidine 1870–glutamine 1892 is disordered.

This sequence belongs to the TRAFAC class myosin-kinesin ATPase superfamily. Kinesin family. KIN-12 subfamily.

This chain is Kinesin-like protein KIN-12E, found in Oryza sativa subsp. japonica (Rice).